The chain runs to 951 residues: Glycine dehydrogenase (decarboxylating) 1 (951 aa).

The residue at position 703 (K703) is an N6-(pyridoxal phosphate)lysine.

The protein belongs to the GcvP family. In terms of assembly, the glycine cleavage system is composed of four proteins: P, T, L and H. It depends on pyridoxal 5'-phosphate as a cofactor.

It catalyses the reaction N(6)-[(R)-lipoyl]-L-lysyl-[glycine-cleavage complex H protein] + glycine + H(+) = N(6)-[(R)-S(8)-aminomethyldihydrolipoyl]-L-lysyl-[glycine-cleavage complex H protein] + CO2. Its function is as follows. The glycine cleavage system catalyzes the degradation of glycine. The P protein binds the alpha-amino group of glycine through its pyridoxal phosphate cofactor; CO(2) is released and the remaining methylamine moiety is then transferred to the lipoamide cofactor of the H protein. This is Glycine dehydrogenase (decarboxylating) 1 from Pseudomonas fluorescens (strain ATCC BAA-477 / NRRL B-23932 / Pf-5).